The sequence spans 288 residues: Bifunctional protein FolD (288 aa).

Residues 165–167 (GRS), Ser-190, and Ile-231 contribute to the NADP(+) site.

Belongs to the tetrahydrofolate dehydrogenase/cyclohydrolase family. In terms of assembly, homodimer.

The enzyme catalyses (6R)-5,10-methylene-5,6,7,8-tetrahydrofolate + NADP(+) = (6R)-5,10-methenyltetrahydrofolate + NADPH. The catalysed reaction is (6R)-5,10-methenyltetrahydrofolate + H2O = (6R)-10-formyltetrahydrofolate + H(+). It functions in the pathway one-carbon metabolism; tetrahydrofolate interconversion. Catalyzes the oxidation of 5,10-methylenetetrahydrofolate to 5,10-methenyltetrahydrofolate and then the hydrolysis of 5,10-methenyltetrahydrofolate to 10-formyltetrahydrofolate. This is Bifunctional protein FolD from Nitrosospira multiformis (strain ATCC 25196 / NCIMB 11849 / C 71).